The chain runs to 418 residues: tRNA-2-methylthio-N(6)-dimethylallyladenosine synthase (418 aa).

The MTTase N-terminal domain maps to 1-118 (MNYLIETIGC…ALKIMNLFRT (118 aa)). Residues Cys-10, Cys-46, Cys-80, Cys-143, Cys-147, and Cys-150 each coordinate [4Fe-4S] cluster. A Radical SAM core domain is found at 129–356 (IKSKIVRYIT…LKESNKISIE (228 aa)). Residues 359–418 (SEMLGSTQQVLAEEIKNGIIKARTKNGRKVFAEGRKEYIGKHINVNIKEAKINSLFGDIV) enclose the TRAM domain.

This sequence belongs to the methylthiotransferase family. MiaB subfamily. As to quaternary structure, monomer. [4Fe-4S] cluster serves as cofactor.

It localises to the cytoplasm. The enzyme catalyses N(6)-dimethylallyladenosine(37) in tRNA + (sulfur carrier)-SH + AH2 + 2 S-adenosyl-L-methionine = 2-methylsulfanyl-N(6)-dimethylallyladenosine(37) in tRNA + (sulfur carrier)-H + 5'-deoxyadenosine + L-methionine + A + S-adenosyl-L-homocysteine + 2 H(+). Catalyzes the methylthiolation of N6-(dimethylallyl)adenosine (i(6)A), leading to the formation of 2-methylthio-N6-(dimethylallyl)adenosine (ms(2)i(6)A) at position 37 in tRNAs that read codons beginning with uridine. In Endomicrobium trichonymphae, this protein is tRNA-2-methylthio-N(6)-dimethylallyladenosine synthase.